Consider the following 493-residue polypeptide: Transcript termination protein A18 (493 aa).

The Helicase ATP-binding domain maps to 100–256 (MIELKRPLYI…NSIINIAKLS (157 aa)). 113 to 120 (LACGFGKT) lines the ATP pocket. The DESH box motif lies at 206–209 (DESH).

This sequence belongs to the helicase family. Poxviruses subfamily. As to quaternary structure, interacts with G2. Might be part of a transcription complex composed at least of G2, A18, and H5.

The protein localises to the virion. In terms of biological role, DNA helicase which seems to act as a postreplicative transcription termination factor. Involved in ATP-dependent release of nascent RNA. Forms a stable complex with single-stranded DNA, and to a lesser extent RNA. In Cowpox virus (strain GRI-90 / Grishak) (CPV), this protein is Transcript termination protein A18.